A 294-amino-acid polypeptide reads, in one-letter code: 4-hydroxy-tetrahydrodipicolinate synthase (294 aa).

Threonine 47 is a pyruvate binding site. Tyrosine 135 (proton donor/acceptor) is an active-site residue. The Schiff-base intermediate with substrate role is filled by lysine 163. Threonine 205 contacts pyruvate.

The protein belongs to the DapA family. As to quaternary structure, homotetramer; dimer of dimers.

The protein localises to the cytoplasm. It catalyses the reaction L-aspartate 4-semialdehyde + pyruvate = (2S,4S)-4-hydroxy-2,3,4,5-tetrahydrodipicolinate + H2O + H(+). It functions in the pathway amino-acid biosynthesis; L-lysine biosynthesis via DAP pathway; (S)-tetrahydrodipicolinate from L-aspartate: step 3/4. Catalyzes the condensation of (S)-aspartate-beta-semialdehyde [(S)-ASA] and pyruvate to 4-hydroxy-tetrahydrodipicolinate (HTPA). The sequence is that of 4-hydroxy-tetrahydrodipicolinate synthase from Rickettsia rickettsii.